A 196-amino-acid chain; its full sequence is Large ribosomal subunit protein bL9c (196 aa).

A chloroplast-targeting transit peptide spans Met1–Ala41.

As to quaternary structure, component of the chloroplast large ribosomal subunit (LSU). Mature 70S chloroplast ribosomes of higher plants consist of a small (30S) and a large (50S) subunit. The 30S small subunit contains 1 molecule of ribosomal RNA (16S rRNA) and 24 different proteins. The 50S large subunit contains 3 rRNA molecules (23S, 5S and 4.5S rRNA) and 33 different proteins.

It is found in the plastid. It localises to the chloroplast. Component of the chloroplast ribosome (chloro-ribosome), a dedicated translation machinery responsible for the synthesis of chloroplast genome-encoded proteins, including proteins of the transcription and translation machinery and components of the photosynthetic apparatus. This chain is Large ribosomal subunit protein bL9c (RPL9), found in Spinacia oleracea (Spinach).